The chain runs to 480 residues: RAC-alpha serine/threonine-protein kinase (480 aa).

In terms of domain architecture, PH spans A5–D108. An N6-acetyllysine mark is found at K14 and K20. Residue K14–I19 participates in 1D-myo-inositol 1,3,4,5-tetrakisphosphate binding. 1D-myo-inositol 1,3,4,5-tetrakisphosphate contacts are provided by residues R23 to R25 and N53. Cysteines 60 and 77 form a disulfide. R86 contacts 1D-myo-inositol 1,3,4,5-tetrakisphosphate. The residue at position 124 (S124) is a Phosphoserine. S129 is subject to Phosphoserine; alternate. S129 carries an O-linked (GlcNAc) serine; alternate glycan. The 259-residue stretch at F150–F408 folds into the Protein kinase domain. Position 156–164 (L156–V164) interacts with ATP. Y176 carries the phosphotyrosine; by TNK2 modification. K179 provides a ligand contact to ATP. D274 (proton acceptor) is an active-site residue. A Glycyl lysine isopeptide (Lys-Gly) (interchain with G-Cter in ubiquitin) cross-link involves residue K284. An intrachain disulfide couples C296 to C310. O-linked (GlcNAc) threonine glycosylation occurs at T305. A Phosphothreonine; by PDPK1 modification is found at T308. T312 carries an O-linked (GlcNAc) threonine glycan. The 72-residue stretch at A409–A480 folds into the AGC-kinase C-terminal domain. Phosphothreonine is present on T448. T450 carries the phosphothreonine; by MTOR modification. The disordered stretch occupies residues T450–A480. O-linked (GlcNAc) serine; alternate glycosylation occurs at S473. S473 is modified (phosphoserine; by MTOR; alternate). Y474 is modified (phosphotyrosine). Phosphoserine is present on S477. Phosphothreonine is present on T479.

Belongs to the protein kinase superfamily. AGC Ser/Thr protein kinase family. RAC subfamily. Interacts (via the C-terminus) with CCDC88A (via its C-terminus) and THEM4 (via its C-terminus). Interacts with AKTIP. Interacts (via PH domain) with MTCP1, TCL1A and TCL1B. Interacts with TRAF6. Interacts with GRB10; the interaction leads to GRB10 phosphorylation thus promoting YWHAE binding. Interacts with RARA; the interaction phosphorylates RARA and represses its transactivation activity. Interacts with MAP3K5 and TNK2. Interacts with BAD, CLK2, PPP2R5B, STK3 and STK4. Interacts (via PH domain) with SIRT1. Interacts with SRPK2 in a phosphorylation-dependent manner. Interacts with RAF1. Interacts with PKN2 (via C-terminal domain); the interaction occurs with the C-terminus cleavage products of PKN2 in apoptotic cells. Interacts with TRIM13; the interaction ubiquitinates AKT1 leading to its proteasomal degradation. Interacts with and phosphorylated by PDPK1. Interacts with BTBD10. Interacts with KCTD20. Interacts with PA2G4. Interacts with PA2G4. Interacts with KIF14; the interaction is detected in the plasma membrane upon INS stimulation and promotes AKT1 phosphorylation. Interacts with FAM83B; activates the PI3K/AKT signaling cascade. Interacts with WDFY2 (via WD repeats 1-3). Forms a complex with WDFY2 and FOXO1. Interacts with FAM168A. Interacts with SYAP1 (via phosphorylated form and BSD domain); this interaction is enhanced in a mTORC2-mediated manner in response to epidermal growth factor (EGF) stimulation and activates AKT1. Interacts with PKHM3. Interacts with FKBP5/FKBP51; promoting interaction between Akt/AKT1 and PHLPP1, thereby enhancing dephosphorylation and subsequent activation of Akt/AKT1. Interacts with TMEM175; leading to formation of the lysoK(GF) complex. O-GlcNAcylation at Thr-305 and Thr-312 inhibits activating phosphorylation at Thr-308 via disrupting the interaction between AKT1 and PDPK1. O-GlcNAcylation at Ser-473 also probably interferes with phosphorylation at this site. Post-translationally, phosphorylation on Thr-308, Ser-473 and Tyr-474 is required for full activity. Phosphorylation of the activation loop at Thr-308 by PDPK1/PDK1 is a prerequisite for full activation. Phosphorylation by mTORC2 in response to growth factors plays a key role in AKT1 activation: mTORC2 phosphorylates different sites depending on the context, such as Thr-450, Ser-473, Ser-477 or Thr-479, thereby facilitating subsequent phosphorylation of the activation loop by PDPK1/PDK1. Phosphorylation at Ser-473 by mTORC2 promotes ubiquitination and degradation by the proteasome. Also phosphorylated at Ser-477 and Thr-479 by CDK2, facilitating subsequent phosphorylation of the activation loop by PDPK1/PDK1. Activated TNK2 phosphorylates it on Tyr-176 resulting in its binding to the anionic plasma membrane phospholipid PA. This phosphorylated form localizes to the cell membrane, where it is targeted by PDPK1 and PDPK2 for further phosphorylations on Thr-308 and Ser-473 leading to its activation. Phosphorylated at Thr-308 and Ser-473 by IKBKE and TBK1. Ser-473 phosphorylation is enhanced by interaction with AGAP2 isoform 2 (PIKE-A). Ser-473 phosphorylation is enhanced by signaling through activated FLT3. Ser-473 is dephosphorylated by PHLPP. Dephosphorylated at Thr-308 and Ser-473 by PP2A phosphatase. The phosphorylated form of PPP2R5B is required for bridging AKT1 with PP2A phosphatase. Ser-473 is dephosphorylated by CPPED1, leading to termination of signaling. AIM2 acts as an inhibitor of AKT1 by inhibiting phosphorylation Ser-473: AIM2 acts both by inhibiting the activity of PRKDC/DNA-PK kinase and promoting dephosphorylation by PP2A phosphatase. In terms of processing, ubiquitinated; undergoes both 'Lys-48'- and 'Lys-63'-linked polyubiquitination. TRAF6-induced 'Lys-63'-linked AKT1 ubiquitination is critical for phosphorylation and activation. When ubiquitinated, it translocates to the plasma membrane, where it becomes phosphorylated. When fully phosphorylated and translocated into the nucleus, undergoes 'Lys-48'-polyubiquitination catalyzed by TTC3, leading to its degradation by the proteasome. Ubiquitinated via 'Lys-48'-linked polyubiquitination by ZNRF1, leading to its degradation by the proteasome. Also ubiquitinated by TRIM13 leading to its proteasomal degradation. Phosphorylated, undergoes 'Lys-48'-linked polyubiquitination preferentially at Lys-284 catalyzed by MUL1, leading to its proteasomal degradation. Acetylated on Lys-14 and Lys-20 by the histone acetyltransferases EP300 and KAT2B. Acetylation results in reduced phosphorylation and inhibition of activity. Deacetylated at Lys-14 and Lys-20 by SIRT1. SIRT1-mediated deacetylation relieves the inhibition. Post-translationally, cleavage by caspase-3/CASP3. Cleaved at the caspase-3 consensus site Asp-462 during apoptosis, resulting in down-regulation of the AKT signaling pathway and decreased cell survival.

It localises to the cytoplasm. It is found in the nucleus. The protein localises to the cell membrane. Its subcellular location is the mitochondrion intermembrane space. It catalyses the reaction L-seryl-[protein] + ATP = O-phospho-L-seryl-[protein] + ADP + H(+). It carries out the reaction L-threonyl-[protein] + ATP = O-phospho-L-threonyl-[protein] + ADP + H(+). In terms of biological role, AKT1 is one of 3 closely related serine/threonine-protein kinases (AKT1, AKT2 and AKT3) called the AKT kinase, and which regulate many processes including metabolism, proliferation, cell survival, growth and angiogenesis. This is mediated through serine and/or threonine phosphorylation of a range of downstream substrates. Over 100 substrate candidates have been reported so far, but for most of them, no isoform specificity has been reported. AKT is responsible of the regulation of glucose uptake by mediating insulin-induced translocation of the SLC2A4/GLUT4 glucose transporter to the cell surface. Phosphorylation of PTPN1 at 'Ser-50' negatively modulates its phosphatase activity preventing dephosphorylation of the insulin receptor and the attenuation of insulin signaling. Phosphorylation of TBC1D4 triggers the binding of this effector to inhibitory 14-3-3 proteins, which is required for insulin-stimulated glucose transport. AKT also regulates the storage of glucose in the form of glycogen by phosphorylating GSK3A at 'Ser-21' and GSK3B at 'Ser-9', resulting in inhibition of its kinase activity. Phosphorylation of GSK3 isoforms by AKT is also thought to be one mechanism by which cell proliferation is driven. AKT also regulates cell survival via the phosphorylation of MAP3K5 (apoptosis signal-related kinase). Phosphorylation of 'Ser-83' decreases MAP3K5 kinase activity stimulated by oxidative stress and thereby prevents apoptosis. AKT mediates insulin-stimulated protein synthesis by phosphorylating TSC2 at 'Ser-939' and 'Thr-1462', thereby activating the mTORC1 signaling pathway, and leading to both phosphorylation of 4E-BP1 and in activation of RPS6KB1. Also regulates the mTORC1 signaling pathway by catalyzing phosphorylation of CASTOR1 and DEPDC5. AKT plays a role as key modulator of the AKT-mTOR signaling pathway controlling the tempo of the process of newborn neurons integration during adult neurogenesis, including correct neuron positioning, dendritic development and synapse formation. Part of a positive feedback loop of mTORC2 signaling by mediating phosphorylation of MAPKAP1/SIN1, promoting mTORC2 activation. AKT is involved in the phosphorylation of members of the FOXO factors (Forkhead family of transcription factors), leading to binding of 14-3-3 proteins and cytoplasmic localization. In particular, FOXO1 is phosphorylated at 'Thr-24', 'Ser-256' and 'Ser-319'. FOXO3 and FOXO4 are phosphorylated on equivalent sites. AKT has an important role in the regulation of NF-kappa-B-dependent gene transcription and positively regulates the activity of CREB1 (cyclic AMP (cAMP)-response element binding protein). The phosphorylation of CREB1 induces the binding of accessory proteins that are necessary for the transcription of pro-survival genes such as BCL2 and MCL1. AKT phosphorylates 'Ser-454' on ATP citrate lyase (ACLY), thereby potentially regulating ACLY activity and fatty acid synthesis. Activates the 3B isoform of cyclic nucleotide phosphodiesterase (PDE3B) via phosphorylation of 'Ser-273', resulting in reduced cyclic AMP levels and inhibition of lipolysis. Phosphorylates PIKFYVE on 'Ser-318', which results in increased PI(3)P-5 activity. The Rho GTPase-activating protein DLC1 is another substrate and its phosphorylation is implicated in the regulation cell proliferation and cell growth. Signals downstream of phosphatidylinositol 3-kinase (PI(3)K) to mediate the effects of various growth factors such as platelet-derived growth factor (PDGF), epidermal growth factor (EGF), insulin and insulin-like growth factor 1 (IGF1). AKT mediates the antiapoptotic effects of IGF1. Essential for the SPATA13-mediated regulation of cell migration and adhesion assembly and disassembly. May be involved in the regulation of the placental development. Phosphorylates STK4/MST1 at 'Thr-120' and 'Thr-387' leading to inhibition of its: kinase activity, nuclear translocation, autophosphorylation and ability to phosphorylate FOXO3. Phosphorylates STK3/MST2 at 'Thr-117' and 'Thr-384' leading to inhibition of its: cleavage, kinase activity, autophosphorylation at Thr-180, binding to RASSF1 and nuclear translocation. Phosphorylates SRPK2 and enhances its kinase activity towards SRSF2 and ACIN1 and promotes its nuclear translocation. Phosphorylates RAF1 at 'Ser-259' and negatively regulates its activity. Phosphorylation of BAD stimulates its pro-apoptotic activity. Phosphorylates KAT6A at 'Thr-369' and this phosphorylation inhibits the interaction of KAT6A with PML and negatively regulates its acetylation activity towards p53/TP53. Phosphorylates palladin (PALLD), modulating cytoskeletal organization and cell motility. Phosphorylates prohibitin (PHB), playing an important role in cell metabolism and proliferation. Phosphorylates CDKN1A, for which phosphorylation at 'Thr-145' induces its release from CDK2 and cytoplasmic relocalization. These recent findings indicate that the AKT1 isoform has a more specific role in cell motility and proliferation. Phosphorylates CLK2 thereby controlling cell survival to ionizing radiation. Phosphorylates PCK1 at 'Ser-90', reducing the binding affinity of PCK1 to oxaloacetate and changing PCK1 into an atypical protein kinase activity using GTP as donor. Also acts as an activator of TMEM175 potassium channel activity in response to growth factors: forms the lysoK(GF) complex together with TMEM175 and acts by promoting TMEM175 channel activation, independently of its protein kinase activity. Acts as a negative regulator of the cGAS-STING pathway by mediating phosphorylation of CGAS during mitosis, leading to its inhibition. Acts as a regulator of mitochondrial calcium uptake by mediating phosphorylation of MICU1 in the mitochondrial intermembrane space, impairing MICU1 maturation. Acts as an inhibitor of tRNA methylation by mediating phosphorylation of the N-terminus of METTL1, thereby inhibiting METTL1 methyltransferase activity. In response to LPAR1 receptor pathway activation, phosphorylates Rabin8/RAB3IP which alters its activity and phosphorylates WDR44 which induces WDR44 binding to Rab11, thereby switching Rab11 vesicular function from preciliary trafficking to endocytic recycling. The sequence is that of RAC-alpha serine/threonine-protein kinase (AKT1) from Bos taurus (Bovine).